The sequence spans 238 residues: Ribonuclease PH (238 aa).

Phosphate contacts are provided by residues arginine 86 and 124-126; that span reads GTR.

This sequence belongs to the RNase PH family. Homohexameric ring arranged as a trimer of dimers.

The enzyme catalyses tRNA(n+1) + phosphate = tRNA(n) + a ribonucleoside 5'-diphosphate. Its function is as follows. Phosphorolytic 3'-5' exoribonuclease that plays an important role in tRNA 3'-end maturation. Removes nucleotide residues following the 3'-CCA terminus of tRNAs; can also add nucleotides to the ends of RNA molecules by using nucleoside diphosphates as substrates, but this may not be physiologically important. Probably plays a role in initiation of 16S rRNA degradation (leading to ribosome degradation) during starvation. This Azorhizobium caulinodans (strain ATCC 43989 / DSM 5975 / JCM 20966 / LMG 6465 / NBRC 14845 / NCIMB 13405 / ORS 571) protein is Ribonuclease PH.